The chain runs to 506 residues: MTYPGPPRPAHVSATPLAELAGQMGAATPERDAEVTGITHDSRAVRPGDLYAALPGARLHGADFVTQAAGLGAVAVLTDPTGADRAAATGLPVLVVDDPRGRMGELAATIYGHPGRDLLQIGITGTSGKTTTAYLIEGGLRTVRSTGLIGTVEMRIGDERIKSERTTPEATDLQALFAVMRERGVDAVAMEVSSHALVLGRVDGCVFDIAVFNNLSPEHMEFHSDMEDYFRAKAQLFTPQRSKLGVVNFDDEYGRRLVEEAGVPIVTFSAEGHPDADWRAQDVEVGPMDSTFTVIGPKEERITARSPLAGPFNVANTLAAIVALAAAGLDPQAAADGIAAVPGVPGRLERVDVGQPYLAVVDYAHKTDAVESVLRALRKVTEGKLHIVLGCGGDRDRTKRMPMGAAAARLADTAVLTSDNPRSEDPLAILATMLAGAAEVPSHERGEVQVFENRAAAIAAVVARARPGDTVLVAGKGHEQGQDIAGVVRPFDDRLVLREAIQQTQG.

Serine 42 contributes to the UDP-N-acetyl-alpha-D-muramoyl-L-alanyl-D-glutamate binding site. 125 to 131 lines the ATP pocket; that stretch reads GTSGKTT. UDP-N-acetyl-alpha-D-muramoyl-L-alanyl-D-glutamate is bound by residues 166-167, serine 193, and arginine 201; that span reads TT. An N6-carboxylysine modification is found at lysine 233. Meso-2,6-diaminopimelate-binding positions include arginine 395, 419–422, glycine 475, and glutamate 479; that span reads DNPR. The short motif at 419–422 is the Meso-diaminopimelate recognition motif element; sequence DNPR.

This sequence belongs to the MurCDEF family. MurE subfamily. It depends on Mg(2+) as a cofactor. In terms of processing, carboxylation is probably crucial for Mg(2+) binding and, consequently, for the gamma-phosphate positioning of ATP.

The protein resides in the cytoplasm. It carries out the reaction UDP-N-acetyl-alpha-D-muramoyl-L-alanyl-D-glutamate + meso-2,6-diaminopimelate + ATP = UDP-N-acetyl-alpha-D-muramoyl-L-alanyl-gamma-D-glutamyl-meso-2,6-diaminopimelate + ADP + phosphate + H(+). It participates in cell wall biogenesis; peptidoglycan biosynthesis. In terms of biological role, catalyzes the addition of meso-diaminopimelic acid to the nucleotide precursor UDP-N-acetylmuramoyl-L-alanyl-D-glutamate (UMAG) in the biosynthesis of bacterial cell-wall peptidoglycan. The chain is UDP-N-acetylmuramoyl-L-alanyl-D-glutamate--2,6-diaminopimelate ligase from Streptomyces avermitilis (strain ATCC 31267 / DSM 46492 / JCM 5070 / NBRC 14893 / NCIMB 12804 / NRRL 8165 / MA-4680).